Consider the following 121-residue polypeptide: MAMNLLNTASIAKEMQTKVTERMGDWFEAEFKAKANSASRRTRLIRSHGHTYTYARYQNTGQLSSNLKQVKKGDKIVVNAGTRANYTSGYHGMYFLVEKKGMQDVKTTLKKGANYANSMKL.

This sequence belongs to the Skunalikevirus tail terminator protein family. In terms of assembly, homohexamer. Interacts with the tail tube protein.

It localises to the virion. Its function is as follows. Plays an essential role in tail assembly by capping the rapidly polymerizing tail once it has reached its requisite length and serving as the interaction surface for the connector and the tail tube proteins. The sequence is that of Probable tail terminator protein from Lactococcus phage SK1 (Lactococcus lactis bacteriophage SK1).